The sequence spans 124 residues: Small ribosomal subunit protein bS6m (124 aa).

This sequence belongs to the bacterial ribosomal protein bS6 family. In terms of assembly, component of the mitochondrial ribosome small subunit (28S) which comprises a 12S rRNA and about 30 distinct proteins.

The protein localises to the mitochondrion. The chain is Small ribosomal subunit protein bS6m (MRPS6) from Bos taurus (Bovine).